Here is a 441-residue protein sequence, read N- to C-terminus: EP1-like glycoprotein 3 (441 aa).

The first 22 residues, 1–22 (MKFSITLALCFTLSIFLIGSQA), serve as a signal peptide directing secretion. The 131-residue stretch at 29 to 159 (QFRVVNEGGY…SGKFVWQSFD (131 aa)) folds into the Bulb-type lectin domain. Residues asparagine 102, asparagine 258, and asparagine 269 are each glycosylated (N-linked (GlcNAc...) asparagine). A WD repeat occupies 254–296 (GSKFNVSTFLSRPKHNATLSFIRLESDGNIRVWSYSTLATSTA). Residues 356-433 (CDPKTFHYFK…SSLVAYVKAP (78 aa)) form the PAN domain. Disulfide bonds link cysteine 387–cysteine 409 and cysteine 391–cysteine 397.

Post-translationally, phosphorylated on tyrosine.

Its subcellular location is the secreted. It localises to the cell wall. In terms of biological role, may be involved in a cell-to cell programmed cell death (PCD) signaling mechanism. The protein is EP1-like glycoprotein 3 of Arabidopsis thaliana (Mouse-ear cress).